Reading from the N-terminus, the 380-residue chain is MSKVDYDSILKDFPFPPAVKEEIKAELEKHGLKKTEAKKVVEKCFQAYLANLMEPGEAAGIVAAQSIGEPGTQMTMRTFHYAGVAEINVTLGLPRLIEILDVRKNPSTPMMTIRLLPEYAKDREKAREVANRIEATYVKDVADIEVDIRRFTIIVKPDEKALERKGLTVEDLKSKIGKALKTEVEETEQGLAVQITEPSYKALMAAFDKLKDTVIMGLKEIKRVIIRKEEDEYVLYTEGSNLKKIMKVKGVDFTRTTTNNIYEIYEVLGIEAARNAIIREALDTLEEQGLEVDVRHIMLVADVMTADGELRQIGRHGVAGEKQSILARAAFEMTVNNLLDAAVRGEEDHLRGITENIIVGQPIKLGTGDVELVLKMGGKK.

The protein belongs to the RNA polymerase beta' chain family. Part of the RNA polymerase complex.

It localises to the cytoplasm. It catalyses the reaction RNA(n) + a ribonucleoside 5'-triphosphate = RNA(n+1) + diphosphate. Its function is as follows. DNA-dependent RNA polymerase (RNAP) catalyzes the transcription of DNA into RNA using the four ribonucleoside triphosphates as substrates. Forms part of the jaw domain. This chain is DNA-directed RNA polymerase subunit Rpo1C, found in Archaeoglobus fulgidus (strain ATCC 49558 / DSM 4304 / JCM 9628 / NBRC 100126 / VC-16).